Here is a 95-residue protein sequence, read N- to C-terminus: Cytochrome b-c1 complex subunit 8, mitochondrial (95 aa).

Residues 57 to 74 form a helical membrane-spanning segment; that stretch reads FLYVAIPFVVVWSIWTRA.

The protein belongs to the UQCRQ/QCR8 family. Component of the ubiquinol-cytochrome c oxidoreductase (cytochrome b-c1 complex, complex III, CIII), a multisubunit enzyme composed of 10 subunits. The complex is composed of 3 respiratory subunits cytochrome b (COB), cytochrome c1 (CYT1) and Rieske protein (RIP1), 2 core protein subunits COR1 and QCR2, and 5 low-molecular weight protein subunits QCR6, QCR7, QCR8, QCR9 and QCR10. The complex exists as an obligatory dimer and forms supercomplexes (SCs) in the inner mitochondrial membrane with a monomer or a dimer of cytochrome c oxidase (complex IV, CIV), resulting in 2 different assemblies (supercomplexes III(2)IV and III(2)IV(2)).

The protein localises to the membrane. Its subcellular location is the mitochondrion inner membrane. In terms of biological role, component of the ubiquinol-cytochrome c oxidoreductase, a multisubunit transmembrane complex that is part of the mitochondrial electron transport chain which drives oxidative phosphorylation. The complex plays an important role in the uptake of multiple carbon sources present in different host niches. The sequence is that of Cytochrome b-c1 complex subunit 8, mitochondrial from Candida albicans (strain SC5314 / ATCC MYA-2876) (Yeast).